The chain runs to 526 residues: tRNA (guanine(26)-N(2))-dimethyltransferase (526 aa).

A compositionally biased stretch (polar residues) spans 1-10 (MTENVNSSGD). A disordered region spans residues 1-20 (MTENVNSSGDSAIKSEDKEE). The Trm1 methyltransferase domain occupies 22–441 (TVIQEGQAKV…APMHLLWDIY (420 aa)). 3 residues coordinate S-adenosyl-L-methionine: arginine 47, arginine 104, and aspartate 122. Residues cysteine 286, cysteine 289, cysteine 325, and cysteine 328 each coordinate Zn(2+). The interval 498–526 (KGKNWGPRQKAKGSVNSTKAGFQLTEHKE) is disordered.

Belongs to the class I-like SAM-binding methyltransferase superfamily. Trm1 family.

It catalyses the reaction guanosine(26) in tRNA + 2 S-adenosyl-L-methionine = N(2)-dimethylguanosine(26) in tRNA + 2 S-adenosyl-L-homocysteine + 2 H(+). Dimethylates a single guanine residue at position 26 of most tRNAs using S-adenosyl-L-methionine as donor of the methyl groups. The polypeptide is tRNA (guanine(26)-N(2))-dimethyltransferase (trm-1) (Caenorhabditis elegans).